A 161-amino-acid polypeptide reads, in one-letter code: Allophycocyanin alpha chain 1 (161 aa).

At Asn71 the chain carries N4-methylasparagine. A (2R,3E)-phycocyanobilin-binding site is contributed by Cys81.

Belongs to the phycobiliprotein family. As to quaternary structure, component of the phycobilisome. Heterodimer of an alpha and a beta chain. Contains one covalently linked bilin chromophore.

It is found in the cellular thylakoid membrane. Its function is as follows. Light-harvesting photosynthetic bile pigment-protein from the phycobiliprotein complex. Allophycocyanin has a maximum absorption at approximately 650 nanometers. The polypeptide is Allophycocyanin alpha chain 1 (Microchaete diplosiphon (Fremyella diplosiphon)).